The chain runs to 446 residues: Calcium-binding and coiled-coil domain-containing protein 2 (446 aa).

Positions 133 to 136 (ILVV) match the CLIR motif. Positions 137-349 (TTQGEVEEIE…RENSRLLSYM (213 aa)) form a coiled coil. An LIR-like motif is present at residues 203-206 (DYWE). The tract at residues 362–390 (TSDEGGARQNPGLAYGNPYSGIQESSSPS) is disordered. The interval 371–381 (NPGLAYGNPYS) is interaction with LGALS8. Positions 381-390 (SGIQESSSPS) are enriched in polar residues. Residues 395 to 446 (KKCPICKADDICDHTLEQQQMQPLCFNCPICDKIFPATEKQIFEDHVFCHSL) form an interaction with MYO6 region. The UBZ1-type zinc finger occupies 419–444 (CFNCPICDKIFPATEKQIFEDHVFCH). Zn(2+)-binding residues include Cys-422, Cys-425, His-440, and His-444. Ser-445 carries the phosphoserine modification.

It belongs to the CALCOCO family. Dimer. Part of a complex consisting of CALCOCO2, TAX1BP1 and MYO6. Interacts with MYO6. Interacts with GEMIN4. Interacts with ATG8 family members MAP1LC3A, MAP1LC3B, GABARAP, GABARAPL1 and GABARAPL2. Interacts with ATG8 family member MAP1LC3C. Interacts with LGALS8. Interacts with TOM1; the interaction is indirect and is mediated by MYO6, which acts as a bridge between TOM1 and CALCOCO2. Interacts with AZI2. As to quaternary structure, (Microbial infection) Interacts with Lassa virus protein Z. In terms of assembly, (Microbial infection) Interacts with Mopeia virus protein Z. Post-translationally, (Microbial infection) Cleaved by S.pyogenes SpeB protease; leading to its degradation. Degradation by SpeB prevents autophagy, promoting to S.pyogenes intracellular replication. Expressed in all tissues tested with highest expression in skeletal muscle and lowest in brain.

It localises to the cytoplasm. The protein localises to the perinuclear region. The protein resides in the cytoskeleton. Its subcellular location is the cytoplasmic vesicle. It is found in the autophagosome membrane. In terms of biological role, xenophagy-specific receptor required for autophagy-mediated intracellular bacteria degradation. Acts as an effector protein of galectin-sensed membrane damage that restricts the proliferation of infecting pathogens such as Salmonella typhimurium upon entry into the cytosol by targeting LGALS8-associated bacteria for autophagy. Initially orchestrates bacteria targeting to autophagosomes and subsequently ensures pathogen degradation by regulating pathogen-containing autophagosome maturation. Bacteria targeting to autophagosomes relies on its interaction with MAP1LC3A, MAP1LC3B and/or GABARAPL2, whereas regulation of pathogen-containing autophagosome maturation requires the interaction with MAP3LC3C. May play a role in ruffle formation and actin cytoskeleton organization and seems to negatively regulate constitutive secretion. This is Calcium-binding and coiled-coil domain-containing protein 2 (CALCOCO2) from Homo sapiens (Human).